The sequence spans 146 residues: MRLFQLLFRASPATLLLVLCLQLGANKAQDNTRKIIIHNFDIPKSVRPNDEVTAVLAVQTELKECMVVKTYLISSIPLQGAFNYKYTACLCDDNPKTFYWDFYTNRTVQIAAVVDVIQELGICPDDAAVIPIKNNRFYTTEILKVE.

The first 28 residues, 1–28 (MRLFQLLFRASPATLLLVLCLQLGANKA), serve as a signal peptide directing secretion. At Q29 the chain carries Pyrrolidone carboxylic acid. Disulfide bonds link C65–C91 and C89–C123. Residue N105 is glycosylated (N-linked (GlcNAc...) asparagine).

This sequence belongs to the PIP family. As to quaternary structure, monomer. Interacts with AZGP1.

It localises to the secreted. This Pan troglodytes (Chimpanzee) protein is Prolactin-inducible protein homolog (PIP).